The chain runs to 307 residues: 4-diphosphocytidyl-2-C-methyl-D-erythritol kinase (307 aa).

The active site involves K14. 107–117 (PVAGGMAGGSA) contributes to the ATP binding site. Residue D149 is part of the active site.

The protein belongs to the GHMP kinase family. IspE subfamily.

It carries out the reaction 4-CDP-2-C-methyl-D-erythritol + ATP = 4-CDP-2-C-methyl-D-erythritol 2-phosphate + ADP + H(+). The protein operates within isoprenoid biosynthesis; isopentenyl diphosphate biosynthesis via DXP pathway; isopentenyl diphosphate from 1-deoxy-D-xylulose 5-phosphate: step 3/6. Its function is as follows. Catalyzes the phosphorylation of the position 2 hydroxy group of 4-diphosphocytidyl-2C-methyl-D-erythritol. The chain is 4-diphosphocytidyl-2-C-methyl-D-erythritol kinase from Thermobifida fusca (strain YX).